Consider the following 804-residue polypeptide: Phenylalanine--tRNA ligase beta subunit (804 aa).

The tRNA-binding domain occupies 40 to 153; that stretch reads PLPDLRVVVG…SSYAVGEPFA (114 aa). One can recognise a B5 domain in the interval 400–476; the sequence is PALLVLPFRP…RLHGYDNIEA (77 aa). Mg(2+) is bound by residues aspartate 454, aspartate 460, glutamate 463, and glutamate 464. The FDX-ACB domain maps to 710–802; that stretch reads SKFPAVQRDL…AESKLGAVIR (93 aa).

The protein belongs to the phenylalanyl-tRNA synthetase beta subunit family. Type 1 subfamily. As to quaternary structure, tetramer of two alpha and two beta subunits. The cofactor is Mg(2+).

The protein resides in the cytoplasm. It catalyses the reaction tRNA(Phe) + L-phenylalanine + ATP = L-phenylalanyl-tRNA(Phe) + AMP + diphosphate + H(+). The polypeptide is Phenylalanine--tRNA ligase beta subunit (Chlorobium luteolum (strain DSM 273 / BCRC 81028 / 2530) (Pelodictyon luteolum)).